The primary structure comprises 1712 residues: Collagen alpha-2(IV) chain (1712 aa).

An N-terminal signal peptide occupies residues 1-25 (MGRDQRAVAGPALRRWLLLGTVTVG). The propeptide at 26–183 (FLAQSVLAGV…LPKEERDRYR (158 aa)) is N-terminal propeptide (7S domain). Disordered regions lie at residues 60-237 (RGQP…GFYG), 302-448 (GLRG…PDGF), 507-640 (INGE…DAGL), 690-906 (GLPG…SPGF), and 1157-1480 (TGPP…GLPG). Residues 68–84 (PQGYNGPPGLQGFPGLQ) show a composition bias toward low complexity. Residues 121–130 (GHPGQGGPRG) are compositionally biased toward gly residues. Asn-138 carries an N-linked (GlcNAc...) asparagine glycan. Residues 140–153 (TQGDSGPQGPPGSE) show a composition bias toward low complexity. Residues 175–186 (PKEERDRYRGEP) are compositionally biased toward basic and acidic residues. The triple-helical region stretch occupies residues 184–1484 (GEPGEPGLVG…SPGLPGMPGR (1301 aa)). Composition is skewed to pro residues over residues 215–224 (RPGPPGPPGP) and 433–445 (PPGPPGLPGPPGP). 2 stretches are compositionally biased toward basic and acidic residues: residues 511-520 (PGRKGDRGDP) and 571-582 (KGDDGSPGRDGL). Composition is skewed to low complexity over residues 628 to 640 (LKGQRGFPGDAGL) and 698 to 710 (TGAKGLRGIPGFA). Positions 711 to 720 (GADGGPGPRG) are enriched in gly residues. The span at 721-730 (LPGDAGREGF) shows a compositional bias: low complexity. Positions 752–766 (DGSPGPIGLPGPDGP) are enriched in pro residues. Composition is skewed to low complexity over residues 769–778 (ERGLPGEVLG), 813–823 (MPGMPGLKGQP), 831–844 (QPGLYGPPGLHGFP), 1302–1328 (GSAALPGSKGDTGNPGAPGTPGTKGWA), and 1400–1421 (QPGTVGPQGRRGPPGAPGEMGP). Residues 1489–1712 (GYLLVKHSQT…SRCQVCMKNL (224 aa)) enclose the Collagen IV NC1 domain. Tyr-1490 is subject to 3'-bromotyrosine. Cystine bridges form between Cys-1504–Cys-1593, Cys-1537–Cys-1590, Cys-1549–Cys-1555, Cys-1612–Cys-1708, Cys-1646–Cys-1705, and Cys-1658–Cys-1665.

The protein belongs to the type IV collagen family. In terms of assembly, there are six type IV collagen isoforms, alpha 1(IV)-alpha 6(IV), each of which can form a triple helix structure with 2 other chains to generate type IV collagen network. Interacts with EFEMP2. Post-translationally, prolines at the third position of the tripeptide repeating unit (G-X-Y) are hydroxylated in some or all of the chains. In terms of processing, type IV collagens contain numerous cysteine residues which are involved in inter- and intramolecular disulfide bonding. 12 of these, located in the NC1 domain, are conserved in all known type IV collagens. The trimeric structure of the NC1 domains is stabilized by covalent bonds between Lys and Met residues. Post-translationally, proteolytic processing produces the C-terminal NC1 peptide, canstatin.

The protein localises to the secreted. It localises to the extracellular space. Its subcellular location is the extracellular matrix. The protein resides in the basement membrane. In terms of biological role, type IV collagen is the major structural component of glomerular basement membranes (GBM), forming a 'chicken-wire' meshwork together with laminins, proteoglycans and entactin/nidogen. Its function is as follows. Canstatin, a cleavage product corresponding to the collagen alpha 2(IV) NC1 domain, possesses both anti-angiogenic and anti-tumor cell activity. It inhibits proliferation and migration of endothelial cells, reduces mitochondrial membrane potential, and induces apoptosis. Specifically induces Fas-dependent apoptosis and activates procaspase-8 and -9 activity. Ligand for alphavbeta3 and alphavbeta5 integrins. The polypeptide is Collagen alpha-2(IV) chain (Homo sapiens (Human)).